A 554-amino-acid polypeptide reads, in one-letter code: Dihydroxy-acid dehydratase (554 aa).

Residue cysteine 48 participates in [2Fe-2S] cluster binding. Aspartate 80 contributes to the Mg(2+) binding site. Position 121 (cysteine 121) interacts with [2Fe-2S] cluster. Residues aspartate 122 and lysine 123 each contribute to the Mg(2+) site. The residue at position 123 (lysine 123) is an N6-carboxylysine. Cysteine 193 lines the [2Fe-2S] cluster pocket. Glutamate 444 serves as a coordination point for Mg(2+). The Proton acceptor role is filled by serine 470.

Belongs to the IlvD/Edd family. In terms of assembly, homodimer. Requires [2Fe-2S] cluster as cofactor. The cofactor is Mg(2+).

It catalyses the reaction (2R)-2,3-dihydroxy-3-methylbutanoate = 3-methyl-2-oxobutanoate + H2O. The enzyme catalyses (2R,3R)-2,3-dihydroxy-3-methylpentanoate = (S)-3-methyl-2-oxopentanoate + H2O. It functions in the pathway amino-acid biosynthesis; L-isoleucine biosynthesis; L-isoleucine from 2-oxobutanoate: step 3/4. The protein operates within amino-acid biosynthesis; L-valine biosynthesis; L-valine from pyruvate: step 3/4. Functions in the biosynthesis of branched-chain amino acids. Catalyzes the dehydration of (2R,3R)-2,3-dihydroxy-3-methylpentanoate (2,3-dihydroxy-3-methylvalerate) into 2-oxo-3-methylpentanoate (2-oxo-3-methylvalerate) and of (2R)-2,3-dihydroxy-3-methylbutanoate (2,3-dihydroxyisovalerate) into 2-oxo-3-methylbutanoate (2-oxoisovalerate), the penultimate precursor to L-isoleucine and L-valine, respectively. The protein is Dihydroxy-acid dehydratase of Tremblaya princeps.